A 342-amino-acid chain; its full sequence is Anthranilate phosphoribosyltransferase (342 aa).

Residues Gly-81, 84–85 (GD), Thr-89, 91–94 (NIST), 109–117 (KHGNRALSS), and Thr-121 contribute to the 5-phospho-alpha-D-ribose 1-diphosphate site. Gly-81 contacts anthranilate. Ser-93 contributes to the Mg(2+) binding site. Anthranilate is bound at residue Asn-112. Anthranilate is bound at residue Arg-167. Mg(2+) is bound by residues Asp-225 and Glu-226.

The protein belongs to the anthranilate phosphoribosyltransferase family. As to quaternary structure, homodimer. The cofactor is Mg(2+).

It carries out the reaction N-(5-phospho-beta-D-ribosyl)anthranilate + diphosphate = 5-phospho-alpha-D-ribose 1-diphosphate + anthranilate. It participates in amino-acid biosynthesis; L-tryptophan biosynthesis; L-tryptophan from chorismate: step 2/5. Catalyzes the transfer of the phosphoribosyl group of 5-phosphorylribose-1-pyrophosphate (PRPP) to anthranilate to yield N-(5'-phosphoribosyl)-anthranilate (PRA). In Agrobacterium fabrum (strain C58 / ATCC 33970) (Agrobacterium tumefaciens (strain C58)), this protein is Anthranilate phosphoribosyltransferase.